Consider the following 794-residue polypeptide: uncharacterized protein (794 aa).

Positions Met1–Ala22 are cleaved as a signal peptide. Cys23 is lipidated: N-palmitoyl cysteine. Cys23 is lipidated: S-diacylglycerol cysteine. Polar residues-rich tracts occupy residues Thr182–Val200 and Gln245–Gln261. Disordered regions lie at residues Thr182–Lys208, Asn222–Gln261, Phe474–Gly529, Ser566–Lys594, and Lys737–Gln757. Residues Lys475–Gly501 show a composition bias toward low complexity. A compositionally biased stretch (polar residues) spans Gly511 to Gly526. A compositionally biased stretch (basic and acidic residues) spans Ala567 to Gly576. Positions Glu577 to Gln593 are enriched in polar residues. Over residues Lys737 to Ser751 the composition is skewed to basic and acidic residues.

Belongs to the MG185/MG260 family.

It is found in the cell membrane. This is an uncharacterized protein from Mycoplasma pneumoniae (strain ATCC 29342 / M129 / Subtype 1) (Mycoplasmoides pneumoniae).